Here is a 494-residue protein sequence, read N- to C-terminus: Putative transporter SVOPL (494 aa).

10 helical membrane-spanning segments follow: residues 48–68 (IALF…IMLI), 86–106 (VAFV…LFGL), 121–141 (FLWG…IWFV), 179–199 (VFWL…IPTI), 203–223 (WLIR…KFIP), 281–301 (TLQI…VILA), 350–370 (IIST…INFL), 385–405 (LFFL…FLFM), 431–451 (AIGM…APFI), and 460–480 (FLGA…SAFT).

It belongs to the major facilitator superfamily.

Its subcellular location is the membrane. The protein is Putative transporter SVOPL (Svopl) of Mus musculus (Mouse).